The following is a 592-amino-acid chain: MRTHYCGHLNKSLAGQTVELCGWVNRRRDLGGLIFIDMRDREGIVQVVVDPDMADAYAVASQLRNEFCIKLTGEVRTRPESQVNKEMATGEVEILAKGLEIINRSDVLPLDFNQKNSEEQRLKYRYLDLRRPEMSDRIKLRAKASSFVRRFLDDNGFLDIETPVLTKATPEGARDYLVPSRVHKGSFYALPQSPQLFKQLLMMSGFDRYYQIVKCFRDEDLRADRQPEFTQIDIETSFMTSDQVRAVTEKMVREMWLELLNVDLGEFPVMPFSEAIRRFGSDKPDLRNPLELVDVADLVKDVDFKVFSGPANDEKGRVAVIRVPGGAELTRKQIDEYTGFVNIYGAKGLAWMKVNDRAAGMEGIQSPVAKFLSEDVINGILERTQAESGDIILFGADKANIVAEALGALRLKLGKDLGLTKEGTWAPLWVVDFPMFEEDDEGNLHAMHHPFTSPLGLTAEELKANPAPAVSNAYDMVLNGYEVGGGSVRIHNAEMQAAVFDILGIDADEQKLKFGFLLDALKFGTPPHAGLAFGLDRLVMLLCGTENIRDVIAFPKTTAAACLMTDAPSVANPAALEELAIAVTVAKEKSAE.

Residue glutamate 171 coordinates L-aspartate. The interval 195 to 198 is aspartate; sequence QLFK. Arginine 217 contributes to the L-aspartate binding site. ATP contacts are provided by residues 217-219 and glutamine 226; that span reads RDE. Position 448 (histidine 448) interacts with L-aspartate. Glutamate 482 serves as a coordination point for ATP. Arginine 489 lines the L-aspartate pocket. An ATP-binding site is contributed by 534-537; it reads GLDR.

The protein belongs to the class-II aminoacyl-tRNA synthetase family. Type 1 subfamily. In terms of assembly, homodimer.

The protein localises to the cytoplasm. The catalysed reaction is tRNA(Asp) + L-aspartate + ATP = L-aspartyl-tRNA(Asp) + AMP + diphosphate. Functionally, catalyzes the attachment of L-aspartate to tRNA(Asp) in a two-step reaction: L-aspartate is first activated by ATP to form Asp-AMP and then transferred to the acceptor end of tRNA(Asp). This chain is Aspartate--tRNA ligase, found in Vibrio vulnificus (strain YJ016).